We begin with the raw amino-acid sequence, 138 residues long: Sporulation-specific cell division protein SsgB (138 aa).

The protein belongs to the SsgA family. As to quaternary structure, monomer. Interacts with SsgA. Interacts with FtsZ (via N-terminus).

Its subcellular location is the cell septum. In terms of biological role, involved in sporulation-specific cell division. Required for early stages of sporulation. Important in the process of growth cessation prior to sporulation-specific cell division. Recruits cell division protein FtsZ to the future septum sites and tethers the contractile ring structure (Z ring) to the cytoplasmic membrane during sporulation. Stimulates polymerization and filament length of FtsZ in vitro. The sequence is that of Sporulation-specific cell division protein SsgB from Thermobifida fusca (strain YX).